The sequence spans 346 residues: tRNA N6-adenosine threonylcarbamoyltransferase (346 aa).

Residues His111 and His115 each coordinate Fe cation. Residues 134-138 (LVSGG), Asp167, Gly180, Asp184, and Asn280 contribute to the substrate site. Residue Asp308 coordinates Fe cation.

It belongs to the KAE1 / TsaD family. Fe(2+) is required as a cofactor.

The protein resides in the cytoplasm. The enzyme catalyses L-threonylcarbamoyladenylate + adenosine(37) in tRNA = N(6)-L-threonylcarbamoyladenosine(37) in tRNA + AMP + H(+). Functionally, required for the formation of a threonylcarbamoyl group on adenosine at position 37 (t(6)A37) in tRNAs that read codons beginning with adenine. Is involved in the transfer of the threonylcarbamoyl moiety of threonylcarbamoyl-AMP (TC-AMP) to the N6 group of A37, together with TsaE and TsaB. TsaD likely plays a direct catalytic role in this reaction. The protein is tRNA N6-adenosine threonylcarbamoyltransferase of Crocosphaera subtropica (strain ATCC 51142 / BH68) (Cyanothece sp. (strain ATCC 51142)).